The sequence spans 476 residues: tRNA(Ile)-lysidine synthase (476 aa).

ATP is bound at residue 30–35 (SGGPDS).

This sequence belongs to the tRNA(Ile)-lysidine synthase family.

Its subcellular location is the cytoplasm. It catalyses the reaction cytidine(34) in tRNA(Ile2) + L-lysine + ATP = lysidine(34) in tRNA(Ile2) + AMP + diphosphate + H(+). Ligates lysine onto the cytidine present at position 34 of the AUA codon-specific tRNA(Ile) that contains the anticodon CAU, in an ATP-dependent manner. Cytidine is converted to lysidine, thus changing the amino acid specificity of the tRNA from methionine to isoleucine. The sequence is that of tRNA(Ile)-lysidine synthase from Bacillus thuringiensis subsp. konkukian (strain 97-27).